We begin with the raw amino-acid sequence, 251 residues long: Vitamin B12 import ATP-binding protein BtuD (251 aa).

The ABC transporter domain occupies 2 to 236 (IRVNSLQVDS…EVLQSVFGTS (235 aa)). Residue 30-37 (GPNGCGKS) coordinates ATP.

The protein belongs to the ABC transporter superfamily. Vitamin B12 importer (TC 3.A.1.13.1) family. The complex is composed of two ATP-binding proteins (BtuD), two transmembrane proteins (BtuC) and a solute-binding protein (BtuF).

It is found in the cell inner membrane. It catalyses the reaction an R-cob(III)alamin(out) + ATP + H2O = an R-cob(III)alamin(in) + ADP + phosphate + H(+). Part of the ABC transporter complex BtuCDF involved in vitamin B12 import. Responsible for energy coupling to the transport system. This chain is Vitamin B12 import ATP-binding protein BtuD, found in Vibrio cholerae serotype O1 (strain ATCC 39541 / Classical Ogawa 395 / O395).